Reading from the N-terminus, the 519-residue chain is Golgi-associated kinase 1B (519 aa).

Topologically, residues 1–37 (MTCPDKPGQLINWFICSLCVPRVRKLWSSRRPRTRRN) are cytoplasmic. The chain crosses the membrane as a helical; Signal-anchor for type II membrane protein span at residues 38–55 (LLLGTACAIYLGFLVSQV). Residues 56-519 (GRASLQHGQA…HGVKVLPMNE (464 aa)) lie on the Extracellular side of the membrane. The segment at 62–103 (HGQAAEKGPHRSRDTAEPSFPEIPLDGTLAPPESQGNGSTLQ) is disordered. Basic and acidic residues predominate over residues 68-77 (KGPHRSRDTA). The N-linked (GlcNAc...) asparagine glycan is linked to N289.

It belongs to the GASK family.

It localises to the golgi apparatus membrane. This Homo sapiens (Human) protein is Golgi-associated kinase 1B.